The sequence spans 415 residues: Serine hydroxymethyltransferase (415 aa).

(6S)-5,6,7,8-tetrahydrofolate contacts are provided by residues Leu121 and 125–127 (GHL). The residue at position 229 (Lys229) is an N6-(pyridoxal phosphate)lysine. A (6S)-5,6,7,8-tetrahydrofolate-binding site is contributed by 352-354 (TPF).

It belongs to the SHMT family. In terms of assembly, homodimer. The cofactor is pyridoxal 5'-phosphate.

The protein resides in the cytoplasm. The catalysed reaction is (6R)-5,10-methylene-5,6,7,8-tetrahydrofolate + glycine + H2O = (6S)-5,6,7,8-tetrahydrofolate + L-serine. The protein operates within one-carbon metabolism; tetrahydrofolate interconversion. It functions in the pathway amino-acid biosynthesis; glycine biosynthesis; glycine from L-serine: step 1/1. In terms of biological role, catalyzes the reversible interconversion of serine and glycine with tetrahydrofolate (THF) serving as the one-carbon carrier. This reaction serves as the major source of one-carbon groups required for the biosynthesis of purines, thymidylate, methionine, and other important biomolecules. Also exhibits THF-independent aldolase activity toward beta-hydroxyamino acids, producing glycine and aldehydes, via a retro-aldol mechanism. The polypeptide is Serine hydroxymethyltransferase (Chromobacterium violaceum (strain ATCC 12472 / DSM 30191 / JCM 1249 / CCUG 213 / NBRC 12614 / NCIMB 9131 / NCTC 9757 / MK)).